We begin with the raw amino-acid sequence, 344 residues long: Phosphate acyltransferase (344 aa).

Belongs to the PlsX family. As to quaternary structure, homodimer. Probably interacts with PlsY.

It localises to the cytoplasm. The catalysed reaction is a fatty acyl-[ACP] + phosphate = an acyl phosphate + holo-[ACP]. It functions in the pathway lipid metabolism; phospholipid metabolism. Functionally, catalyzes the reversible formation of acyl-phosphate (acyl-PO(4)) from acyl-[acyl-carrier-protein] (acyl-ACP). This enzyme utilizes acyl-ACP as fatty acyl donor, but not acyl-CoA. This is Phosphate acyltransferase from Yersinia enterocolitica serotype O:8 / biotype 1B (strain NCTC 13174 / 8081).